A 354-amino-acid polypeptide reads, in one-letter code: MANQYHNDLLAPYLALDQGGKFHAEYVWIDGDGGLRSKTTTVDQKVTDISQLRVWDFDGSSTNQAPSGNSDVYLRPSAIFKDPFRGGENILVLSETYNNDGTPNRTNHRHHTAKVMELAKDEIPWFGIEQEYTLFDADGSPYGWPKGGFPGPQGPYYCGAGTGKVFARDLIEAHYRACLYAGVNISGINAEVMPSQWEFQVGPCEGISMGDHLWMARYLLIRVAEQWGVKVSFHPKPLQGDWNGAGAHTNYSTLAMREPGGMKYIEAAIEKLAKRHDEHIAVYGEDNEMRLTGRHETGHIGTFSSGVANRGASIRVPRHVANKGYGYLEDRRPASNIDPYRVTGIIIETTILDK.

Positions 22–101 constitute a GS beta-grasp domain; the sequence is FHAEYVWIDG…VLSETYNNDG (80 aa). One can recognise a GS catalytic domain in the interval 108–354; that stretch reads HRHHTAKVME…IIIETTILDK (247 aa).

It belongs to the glutamine synthetase family. As to quaternary structure, homooctamer.

The protein resides in the cytoplasm. The catalysed reaction is L-glutamate + NH4(+) + ATP = L-glutamine + ADP + phosphate + H(+). The chain is Glutamine synthetase (GLN1) from Amanita muscaria (Fly agaric).